The sequence spans 229 residues: Flagellar L-ring protein (229 aa).

Residues 1–20 (MLKTVLRLPVCAALLALAAG) form the signal peptide. C21 carries N-palmitoyl cysteine lipidation. Residue C21 is the site of S-diacylglycerol cysteine attachment.

Belongs to the FlgH family. As to quaternary structure, the basal body constitutes a major portion of the flagellar organelle and consists of four rings (L,P,S, and M) mounted on a central rod.

The protein resides in the cell outer membrane. Its subcellular location is the bacterial flagellum basal body. In terms of biological role, assembles around the rod to form the L-ring and probably protects the motor/basal body from shearing forces during rotation. The protein is Flagellar L-ring protein of Bordetella pertussis (strain Tohama I / ATCC BAA-589 / NCTC 13251).